The primary structure comprises 1360 residues: Lysine-specific demethylase REF6 (1360 aa).

Ala2 bears the N-acetylalanine mark. The JmjN domain occupies 20–61 (APEFRPTLAEFQDPIAYILKIEEEASRYGICKILPPLPPPSK). Residues 203 to 369 (ETAWNMRAMS…MAKDAAIRRA (167 aa)) enclose the JmjC domain. 3 residues coordinate Fe cation: His246, Glu248, and His337. Residues 652-698 (YGDSSDSEEEDQKGLVTPSSKGETKTYDQEGSDGHEEARDGRTSDFN) are disordered. The span at 673 to 694 (GETKTYDQEGSDGHEEARDGRT) shows a compositional bias: basic and acidic residues. Residues 944–951 (CRKRKIRA) carry the Nuclear localization signal motif. 4 disordered regions span residues 955–1012 (PRKK…DPHK), 1044–1081 (AASESSMENGSQHSMYDHDDDDDDIDRQPRGIPRSQQT), 1133–1155 (TGKRQTRSTAKRIAKTKTVQSSR), and 1172–1238 (EELD…NEEE). 2 stretches are compositionally biased toward polar residues: residues 994–1008 (ETGNTASGDSSNQMS) and 1046–1057 (SESSMENGSQHS). The span at 1136–1147 (RQTRSTAKRIAK) shows a compositional bias: basic residues. The span at 1225 to 1238 (EKEEEEEEEENEEE) shows a compositional bias: acidic residues. The C2H2-type 1; degenerate zinc finger occupies 1243 to 1266 (YQCNMEGCTMSFSSEKQLMLHKRN). Cys1245, Cys1250, His1263, Cys1268, Cys1273, His1280, His1286, His1290, Cys1298, Cys1303, His1316, His1320, Cys1328, Cys1333, His1346, and His1352 together coordinate Zn(2+). 3 C2H2-type zinc fingers span residues 1266–1290 (NICPIKGCGKNFFSHKYLVQHQRVH), 1296–1320 (LKCPWKGCKMTFKWAWSRTEHIRVH), and 1326–1352 (YVCAEPDCGQTFRFVSDFSRHKRKTGH). The interval 1275–1348 (KNFFSHKYLV…FVSDFSRHKR (74 aa)) is DNA-binding.

Belongs to the JHDM3 histone demethylase family. In terms of assembly, forms homooligomers. Interacts with BZR2 (via N-terminus). Interacts with BRM in the SWI/SNF complex. Interacts (via N-terminus) with NFYC9. Associates with INO80. Highly expressed in the shoot apical meristem and primary and secondary root tips, and lower expression in cotyledons, leaves and root axis along vascular tissues. Detected in inflorescences, stems and siliques. Present in seeds.

It localises to the nucleus. The catalysed reaction is N(6),N(6),N(6)-trimethyl-L-lysyl(27)-[histone H3] + 2-oxoglutarate + O2 = N(6),N(6)-dimethyl-L-lysyl(27)-[histone H3] + formaldehyde + succinate + CO2. It carries out the reaction N(6),N(6)-dimethyl-L-lysyl(27)-[histone H3] + 2-oxoglutarate + O2 = N(6)-methyl-L-lysyl(27)-[histone H3] + formaldehyde + succinate + CO2. Functionally, histone demethylase that demethylates 'Lys-27' (H3K27me) of histone H3, thus acting as a positive regulator of gene expression. Demethylates both tri- (H3K27me3) and di-methylated (H3K27me2) H3K27me. Also demethylates H3K4me3/2 and H3K36me3/2 in an in vitro assay. Involved in the transcriptional regulation of hundreds of genes regulating developmental patterning and responses to various stimuli. Binds DNA via its four zinc fingers in a sequence-specific manner, 5'-CTCTG(C/T)T(C/T)-3' (5'-CTCTGYTY-3'), with a preference for hypo-methylated status (e.g. cytosine methylation), to promote the demethylation of H3K27me3 and recruit the chromatin remodeler BRM in order to activate gene expression. Participates in the regulation of organ boundary formation. Bind mostly motifs located in active chromatin states which are depleted for heterochromatic modifications. Involved in the regulation of flowering time by repressing FLOWERING LOCUS C (FLC) expression. Stimulates lateral roots formation (e.g. primordium initiation and emergence) via the epigenetic de-repression of PIN genes such as PIN1, PIN3 and PIN7 directly by modulating the methylation status of their loci. Interacts with the NF-Y complex to regulate SOC1. Mediates the recruitment of BRM to its target loci. Together with EEN, involved in the epigenetic chromatin-dependent regulatory mechanism that monitors the expression of the essential multifunctional plant stress regulator EIN2 via H3K27me3 repressive histone demethylation and histone variant H2A.Z eviction, thus modulating responses to ethylene (ET), especially during embryogenesis. Eluviates seed dormancy by triggering abscisic acid (ABA) catabolism in seeds via the induction of CYP707A1 and CYP707A3 expression, genes involved in ABA degradation; binds directly to CYP707A1 and CYP707A3 loci to reduce their H3K27me3 levels in developing siliques. Required for systemic acquired resistance (SAR) toward pathogenic bacteria (e.g. Pseudomonas syringae pv tomato DC3000 (avrPto)). Together with FLD and MSI4/FVE, contributes to dehydroabietinal-dependent (DA, a diterpenoid tricyclic diterpene) activation of flowering ans SAR. Binds to the HSFA2 chromatin region to alleviate H3K27me3 repressive marks and trigger its expression in response to heat in a BRM-dependent manner. Involved in the mechanisms necessary for quick response to heat and subsequent heritable transgenerational memory of heat acclimation (global warming) such as early flowering and attenuated immunity; this process includes epigenetic regulation as well as post-transcriptional gene silencing (PTGS). In response to heat, HSFA2 is activated and promotes the expression of REF6 which in turn derepresses HSFA2, thus establishing a heritable feedback loop able to trigger SGIP1 and subsequent SGIP1-mediated SGS3 degradation; this prevents the biosynthesis of trans-acting siRNA (tasiRNA) and leads to the release of HTT5, which drives early flowering but attenuates immunity. In terms of biological role, involved in the maintenance of H3K27me1 histone marks on euchromatin in a PRC2-dependent manner, to maintain low-level basal expression of corresponding genes. Together with ELF6, required for H3K27me3 resetting (especially in constitutive heterochromatin within the pericentromeric regions) and transgenerational inheritance of histone marks, thus acting in safeguarding genome and epigenome integrity during sexual reproduction. The chain is Lysine-specific demethylase REF6 from Arabidopsis thaliana (Mouse-ear cress).